The primary structure comprises 121 residues: Trypsin/alpha-amylase inhibitor CMX2 (121 aa).

The signal sequence occupies residues 1–24; the sequence is MAFKHQLILSTAILLAVLAAASAS.

Belongs to the protease inhibitor I6 (cereal trypsin/alpha-amylase inhibitor) family.

It localises to the secreted. This is Trypsin/alpha-amylase inhibitor CMX2 from Triticum aestivum (Wheat).